The sequence spans 139 residues: Nucleoside diphosphate kinase (139 aa).

Residues K10, F58, R86, T92, R104, and N114 each contribute to the ATP site. Catalysis depends on H117, which acts as the Pros-phosphohistidine intermediate.

This sequence belongs to the NDK family. Homotetramer. It depends on Mg(2+) as a cofactor.

It localises to the cytoplasm. The enzyme catalyses a 2'-deoxyribonucleoside 5'-diphosphate + ATP = a 2'-deoxyribonucleoside 5'-triphosphate + ADP. The catalysed reaction is a ribonucleoside 5'-diphosphate + ATP = a ribonucleoside 5'-triphosphate + ADP. Major role in the synthesis of nucleoside triphosphates other than ATP. The ATP gamma phosphate is transferred to the NDP beta phosphate via a ping-pong mechanism, using a phosphorylated active-site intermediate. In Rhodococcus opacus (strain B4), this protein is Nucleoside diphosphate kinase.